A 101-amino-acid polypeptide reads, in one-letter code: Large ribosomal subunit protein bL21 (101 aa).

This sequence belongs to the bacterial ribosomal protein bL21 family. As to quaternary structure, part of the 50S ribosomal subunit. Contacts protein L20.

This protein binds to 23S rRNA in the presence of protein L20. The sequence is that of Large ribosomal subunit protein bL21 from Corynebacterium diphtheriae (strain ATCC 700971 / NCTC 13129 / Biotype gravis).